Here is a 65-residue protein sequence, read N- to C-terminus: Large ribosomal subunit protein bL35 (65 aa).

The span at 1–16 (MPKMKTHRASAKRFKK) shows a compositional bias: basic residues. The tract at residues 1 to 24 (MPKMKTHRASAKRFKKTANGGLKS) is disordered.

Belongs to the bacterial ribosomal protein bL35 family.

The chain is Large ribosomal subunit protein bL35 from Leuconostoc mesenteroides subsp. mesenteroides (strain ATCC 8293 / DSM 20343 / BCRC 11652 / CCM 1803 / JCM 6124 / NCDO 523 / NBRC 100496 / NCIMB 8023 / NCTC 12954 / NRRL B-1118 / 37Y).